The chain runs to 1865 residues: Endoribonuclease Dicer (1865 aa).

The Helicase ATP-binding domain maps to 41-213 (LLEAALEHNT…DLEEKIQNLE (173 aa)). Position 54–61 (54–61 (LNTGSGKT)) interacts with ATP. Residues 161-164 (DECH) carry the DECH box motif. The interval 397–417 (SWSDSEDDDEDEEAEAKEKTE) is disordered. The span at 400–411 (DSEDDDEDEEAE) shows a compositional bias: acidic residues. The region spanning 419 to 588 (NFPSPFTNIL…SAECNDFELE (170 aa)) is the Helicase C-terminal domain. One can recognise a Dicer dsRNA-binding fold domain in the interval 616-708 (AIGHVNRYCA…MPVGKETVKY (93 aa)). The interval 713 to 732 (DLHDEEETSVPGRPGSTKRR) is disordered. The PAZ domain maps to 881–1028 (KFMEDIEKSE…LVPELCAIHP (148 aa)). Polar residues-rich tracts occupy residues 1111-1128 (GTSS…SMEV) and 1192-1201 (STQTTTSVSV). 2 disordered regions span residues 1111-1142 (GTSS…PDEK) and 1190-1259 (DLST…DCRS). Over residues 1240 to 1252 (SETATSTPAPSET) the composition is skewed to low complexity. One can recognise an RNase III 1 domain in the interval 1262-1385 (AGPAWDSPKT…TDKWDSDENK (124 aa)). The Mg(2+) site is built by glutamate 1298, aspartate 1377, and aspartate 1380. The disordered stretch occupies residues 1373–1417 (KSSTDKWDSDENKDLANGKASDDEDEDDDDEPEEAEVEPSKEDVN). Residues 1374–1388 (SSTDKWDSDENKDLA) are compositionally biased toward basic and acidic residues. Acidic residues predominate over residues 1394–1409 (DDEDEDDDDEPEEAEV). The RNase III 2 domain maps to 1609–1767 (FLNFESKINY…LAGAIYMDSG (159 aa)). The Mg(2+) site is built by glutamate 1648, aspartate 1753, and glutamate 1756. The DRBM domain maps to 1792 to 1857 (VPRSPVRELL…ARRALRSLKA (66 aa)).

This sequence belongs to the helicase family. Dicer subfamily. Component of the RISC loading complex (RLC), or micro-RNA (miRNA) loading complex (miRLC), which is composed of dicer1, ago2 and tarbp2; dicer1 and tarbp2 are required to process precursor miRNAs (pre-miRNAs) to mature miRNAs and then load them onto ago2. Note that the trimeric RLC/miRLC is also referred to as RISC. The cofactor is Mg(2+). Requires Mn(2+) as cofactor.

The protein resides in the cytoplasm. It catalyses the reaction Endonucleolytic cleavage to 5'-phosphomonoester.. In terms of biological role, double-stranded RNA (dsRNA) endoribonuclease playing a central role in short dsRNA-mediated post-transcriptional gene silencing. Cleaves naturally occurring long dsRNAs and short hairpin pre-microRNAs (miRNA) into fragments of twenty-one to twenty-three nucleotides with 3' overhang of two nucleotides, producing respectively short interfering RNAs (siRNA) and mature microRNAs. SiRNAs and miRNAs serve as guide to direct the RNA-induced silencing complex (RISC) to complementary RNAs to degrade them or prevent their translation. Gene silencing mediated by siRNAs, also called RNA interference, controls the elimination of transcripts from mobile and repetitive DNA elements of the genome but also the degradation of exogenous RNA of viral origin for instance. The miRNA pathway on the other side is a mean to specifically regulate the expression of target genes. The polypeptide is Endoribonuclease Dicer (dicer1) (Danio rerio (Zebrafish)).